A 315-amino-acid chain; its full sequence is Porphobilinogen deaminase (315 aa).

An S-(dipyrrolylmethanemethyl)cysteine modification is found at cysteine 234.

Belongs to the HMBS family. As to quaternary structure, monomer. Requires dipyrromethane as cofactor.

The enzyme catalyses 4 porphobilinogen + H2O = hydroxymethylbilane + 4 NH4(+). It functions in the pathway porphyrin-containing compound metabolism; protoporphyrin-IX biosynthesis; coproporphyrinogen-III from 5-aminolevulinate: step 2/4. In terms of biological role, tetrapolymerization of the monopyrrole PBG into the hydroxymethylbilane pre-uroporphyrinogen in several discrete steps. This is Porphobilinogen deaminase (hemC) from Mycobacterium leprae (strain TN).